The chain runs to 400 residues: 3-phenylpropionate/cinnamic acid dioxygenase ferredoxin--NAD(+) reductase component (400 aa).

5 to 36 (TIIIVGGGQAAAMAAASLRQQGFTGELHLFSD) is an FAD binding site. NAD(+) is bound at residue 146 to 174 (SVVIVGAGTIGLELAASATQRRCKVTVIE).

Belongs to the bacterial ring-hydroxylating dioxygenase ferredoxin reductase family. This dioxygenase system consists of four proteins: the two subunits of the hydroxylase component (HcaE and HcaF), a ferredoxin (HcaC) and a ferredoxin reductase (HcaD). FAD serves as cofactor.

The enzyme catalyses 2 reduced [2Fe-2S]-[ferredoxin] + NAD(+) + H(+) = 2 oxidized [2Fe-2S]-[ferredoxin] + NADH. It functions in the pathway aromatic compound metabolism; 3-phenylpropanoate degradation. In terms of biological role, part of the multicomponent 3-phenylpropionate dioxygenase, that converts 3-phenylpropionic acid (PP) and cinnamic acid (CI) into 3-phenylpropionate-dihydrodiol (PP-dihydrodiol) and cinnamic acid-dihydrodiol (CI-dihydrodiol), respectively. This Shigella sonnei (strain Ss046) protein is 3-phenylpropionate/cinnamic acid dioxygenase ferredoxin--NAD(+) reductase component.